The chain runs to 331 residues: Peroxidase 49 (331 aa).

An N-terminal signal peptide occupies residues 1–22 (MARLTSFLLLLSLICFVPLCLC). 4 disulfide bridges follow: cysteine 39–cysteine 119, cysteine 72–cysteine 77, cysteine 125–cysteine 326, and cysteine 204–cysteine 236. Histidine 70 (proton acceptor) is an active-site residue. Aspartate 71, valine 74, glycine 76, aspartate 78, and serine 80 together coordinate Ca(2+). Position 167 (proline 167) interacts with substrate. Asparagine 170 carries N-linked (GlcNAc...) asparagine glycosylation. Residue histidine 197 coordinates heme b. Position 198 (threonine 198) interacts with Ca(2+). Asparagine 213 carries an N-linked (GlcNAc...) asparagine glycan. The Ca(2+) site is built by aspartate 249, serine 252, and aspartate 257.

This sequence belongs to the peroxidase family. Classical plant (class III) peroxidase subfamily. It depends on heme b as a cofactor. Ca(2+) is required as a cofactor.

The protein resides in the secreted. It carries out the reaction 2 a phenolic donor + H2O2 = 2 a phenolic radical donor + 2 H2O. Its function is as follows. Removal of H(2)O(2), oxidation of toxic reductants, biosynthesis and degradation of lignin, suberization, auxin catabolism, response to environmental stresses such as wounding, pathogen attack and oxidative stress. These functions might be dependent on each isozyme/isoform in each plant tissue. This chain is Peroxidase 49 (PER49), found in Arabidopsis thaliana (Mouse-ear cress).